The primary structure comprises 368 residues: Quinolinate synthase (368 aa).

Iminosuccinate-binding residues include His-46 and Ser-63. Cys-110 is a [4Fe-4S] cluster binding site. Iminosuccinate is bound by residues 141-143 and Ser-162; that span reads YVN. Cys-230 is a [4Fe-4S] cluster binding site. Residues 256 to 258 and Thr-273 each bind iminosuccinate; that span reads HPE. Residue Cys-320 participates in [4Fe-4S] cluster binding.

This sequence belongs to the quinolinate synthase family. Type 3 subfamily. As to quaternary structure, homotrimer. It depends on [4Fe-4S] cluster as a cofactor.

It is found in the cytoplasm. It catalyses the reaction iminosuccinate + dihydroxyacetone phosphate = quinolinate + phosphate + 2 H2O + H(+). Its pathway is cofactor biosynthesis; NAD(+) biosynthesis; quinolinate from iminoaspartate: step 1/1. Catalyzes the condensation of iminoaspartate with dihydroxyacetone phosphate to form quinolinate. This is Quinolinate synthase from Bacillus subtilis (strain 168).